The sequence spans 147 residues: Hemoglobin subunit epsilon (147 aa).

Residues 3–147 (HLTAEEKAAI…VAIALGHKYH (145 aa)) enclose the Globin domain. Phosphoserine is present on residues serine 14 and serine 51. The heme b site is built by histidine 64 and histidine 93.

It belongs to the globin family. In terms of assembly, heterotetramer of two alpha chains and two epsilon chains in early embryonic hemoglobin Gower-2; two zeta chains and two epsilon chains in early embryonic hemoglobin Gower-1. As to expression, red blood cells.

In terms of biological role, the epsilon chain is a beta-type chain of early mammalian embryonic hemoglobin. The protein is Hemoglobin subunit epsilon (HBE1) of Ateles belzebuth (White-bellied spider monkey).